A 331-amino-acid polypeptide reads, in one-letter code: Anthranilate phosphoribosyltransferase (331 aa).

5-phospho-alpha-D-ribose 1-diphosphate contacts are provided by residues Gly79, 82-83 (GD), Thr87, 89-92 (NVST), 107-115 (KHGNYGVSS), and Ser119. Gly79 lines the anthranilate pocket. Ser91 is a Mg(2+) binding site. Position 110 (Asn110) interacts with anthranilate. Position 165 (Arg165) interacts with anthranilate. Residues Asp223 and Glu224 each contribute to the Mg(2+) site.

This sequence belongs to the anthranilate phosphoribosyltransferase family. In terms of assembly, homodimer. Requires Mg(2+) as cofactor.

The enzyme catalyses N-(5-phospho-beta-D-ribosyl)anthranilate + diphosphate = 5-phospho-alpha-D-ribose 1-diphosphate + anthranilate. Its pathway is amino-acid biosynthesis; L-tryptophan biosynthesis; L-tryptophan from chorismate: step 2/5. In terms of biological role, catalyzes the transfer of the phosphoribosyl group of 5-phosphorylribose-1-pyrophosphate (PRPP) to anthranilate to yield N-(5'-phosphoribosyl)-anthranilate (PRA). In Christiangramia forsetii (strain DSM 17595 / CGMCC 1.15422 / KT0803) (Gramella forsetii), this protein is Anthranilate phosphoribosyltransferase.